We begin with the raw amino-acid sequence, 117 residues long: Hydrogenase maturation factor HypA (117 aa).

Residue histidine 2 participates in Ni(2+) binding. 4 residues coordinate Zn(2+): cysteine 73, cysteine 76, cysteine 90, and cysteine 93.

This sequence belongs to the HypA/HybF family.

In terms of biological role, involved in the maturation of [NiFe] hydrogenases. Required for nickel insertion into the metal center of the hydrogenase. The chain is Hydrogenase maturation factor HypA from Pectobacterium atrosepticum (strain SCRI 1043 / ATCC BAA-672) (Erwinia carotovora subsp. atroseptica).